Here is a 405-residue protein sequence, read N- to C-terminus: 4-hydroxy-3-methylbut-2-enyl diphosphate reductase (405 aa).

Cys66 lines the [4Fe-4S] cluster pocket. (2E)-4-hydroxy-3-methylbut-2-enyl diphosphate is bound at residue His96. Dimethylallyl diphosphate is bound at residue His96. His96 serves as a coordination point for isopentenyl diphosphate. Cys158 lines the [4Fe-4S] cluster pocket. A (2E)-4-hydroxy-3-methylbut-2-enyl diphosphate-binding site is contributed by His186. His186 lines the dimethylallyl diphosphate pocket. His186 is an isopentenyl diphosphate binding site. The Proton donor role is filled by Glu188. Position 251 (Thr251) interacts with (2E)-4-hydroxy-3-methylbut-2-enyl diphosphate. Cys289 serves as a coordination point for [4Fe-4S] cluster. 4 residues coordinate (2E)-4-hydroxy-3-methylbut-2-enyl diphosphate: Ser318, Ser319, Asn320, and Ser380. Dimethylallyl diphosphate-binding residues include Ser318, Ser319, Asn320, and Ser380. 4 residues coordinate isopentenyl diphosphate: Ser318, Ser319, Asn320, and Ser380.

The protein belongs to the IspH family. It depends on [4Fe-4S] cluster as a cofactor.

The catalysed reaction is isopentenyl diphosphate + 2 oxidized [2Fe-2S]-[ferredoxin] + H2O = (2E)-4-hydroxy-3-methylbut-2-enyl diphosphate + 2 reduced [2Fe-2S]-[ferredoxin] + 2 H(+). It carries out the reaction dimethylallyl diphosphate + 2 oxidized [2Fe-2S]-[ferredoxin] + H2O = (2E)-4-hydroxy-3-methylbut-2-enyl diphosphate + 2 reduced [2Fe-2S]-[ferredoxin] + 2 H(+). It functions in the pathway isoprenoid biosynthesis; dimethylallyl diphosphate biosynthesis; dimethylallyl diphosphate from (2E)-4-hydroxy-3-methylbutenyl diphosphate: step 1/1. It participates in isoprenoid biosynthesis; isopentenyl diphosphate biosynthesis via DXP pathway; isopentenyl diphosphate from 1-deoxy-D-xylulose 5-phosphate: step 6/6. Its function is as follows. Catalyzes the conversion of 1-hydroxy-2-methyl-2-(E)-butenyl 4-diphosphate (HMBPP) into a mixture of isopentenyl diphosphate (IPP) and dimethylallyl diphosphate (DMAPP). Acts in the terminal step of the DOXP/MEP pathway for isoprenoid precursor biosynthesis. This chain is 4-hydroxy-3-methylbut-2-enyl diphosphate reductase, found in Cyanothece sp. (strain PCC 7425 / ATCC 29141).